Here is a 135-residue protein sequence, read N- to C-terminus: MGRQRQQRSRGSRSRRRVRKNISTAVVHIKSSFNNTIISVTDQEGNVIAWESAGSMGFKGSRKSTPYAAQMTAESAANKAMEHGVKRVDIQVKGHGSGRDMAARTFQAMGIEVLSIKDVTGQPHNGCRPPKRRRG.

The tract at residues 1–20 (MGRQRQQRSRGSRSRRRVRK) is disordered.

This sequence belongs to the universal ribosomal protein uS11 family. Part of the 30S ribosomal subunit. Interacts with proteins S7 and S18. Binds to IF-3.

In terms of biological role, located on the platform of the 30S subunit, it bridges several disparate RNA helices of the 16S rRNA. Forms part of the Shine-Dalgarno cleft in the 70S ribosome. This chain is Small ribosomal subunit protein uS11, found in Rubrobacter xylanophilus (strain DSM 9941 / JCM 11954 / NBRC 16129 / PRD-1).